Reading from the N-terminus, the 629-residue chain is tRNA uridine 5-carboxymethylaminomethyl modification enzyme MnmG (629 aa).

FAD is bound by residues Gly-13–Gly-18, Val-125, and Ser-180. Gly-273–Phe-287 contributes to the NAD(+) binding site. Gln-370 contacts FAD.

This sequence belongs to the MnmG family. As to quaternary structure, homodimer. Heterotetramer of two MnmE and two MnmG subunits. FAD is required as a cofactor.

It is found in the cytoplasm. NAD-binding protein involved in the addition of a carboxymethylaminomethyl (cmnm) group at the wobble position (U34) of certain tRNAs, forming tRNA-cmnm(5)s(2)U34. The sequence is that of tRNA uridine 5-carboxymethylaminomethyl modification enzyme MnmG from Escherichia coli O127:H6 (strain E2348/69 / EPEC).